The following is a 355-amino-acid chain: UDP-N-acetylglucosamine--N-acetylmuramyl-(pentapeptide) pyrophosphoryl-undecaprenol N-acetylglucosamine transferase (355 aa).

Residues T15–G17, N127, R163, S191, I244, A263–E268, and Q288 each bind UDP-N-acetyl-alpha-D-glucosamine.

It belongs to the glycosyltransferase 28 family. MurG subfamily.

The protein localises to the cell inner membrane. It carries out the reaction di-trans,octa-cis-undecaprenyl diphospho-N-acetyl-alpha-D-muramoyl-L-alanyl-D-glutamyl-meso-2,6-diaminopimeloyl-D-alanyl-D-alanine + UDP-N-acetyl-alpha-D-glucosamine = di-trans,octa-cis-undecaprenyl diphospho-[N-acetyl-alpha-D-glucosaminyl-(1-&gt;4)]-N-acetyl-alpha-D-muramoyl-L-alanyl-D-glutamyl-meso-2,6-diaminopimeloyl-D-alanyl-D-alanine + UDP + H(+). It participates in cell wall biogenesis; peptidoglycan biosynthesis. In terms of biological role, cell wall formation. Catalyzes the transfer of a GlcNAc subunit on undecaprenyl-pyrophosphoryl-MurNAc-pentapeptide (lipid intermediate I) to form undecaprenyl-pyrophosphoryl-MurNAc-(pentapeptide)GlcNAc (lipid intermediate II). The chain is UDP-N-acetylglucosamine--N-acetylmuramyl-(pentapeptide) pyrophosphoryl-undecaprenol N-acetylglucosamine transferase from Salmonella dublin (strain CT_02021853).